A 383-amino-acid chain; its full sequence is DNA-directed RNA polymerase subunit alpha (383 aa).

The segment at 1–240 (MEKKTGLIQF…NLFHQISPPL (240 aa)) is alpha N-terminal domain (alpha-NTD). The tract at residues 306–383 (IDKQMNDSVN…RFNMELLPTK (78 aa)) is alpha C-terminal domain (alpha-CTD).

It belongs to the RNA polymerase alpha chain family. In plastids the minimal PEP RNA polymerase catalytic core is composed of four subunits: alpha, beta, beta', and beta''. When a (nuclear-encoded) sigma factor is associated with the core the holoenzyme is formed, which can initiate transcription.

The protein localises to the plastid. The protein resides in the chloroplast. The catalysed reaction is RNA(n) + a ribonucleoside 5'-triphosphate = RNA(n+1) + diphosphate. Functionally, DNA-dependent RNA polymerase catalyzes the transcription of DNA into RNA using the four ribonucleoside triphosphates as substrates. This Staurastrum punctulatum (Green alga) protein is DNA-directed RNA polymerase subunit alpha.